Consider the following 377-residue polypeptide: Guanine nucleotide-binding protein subunit alpha-13 (377 aa).

S-palmitoyl cysteine attachment occurs at residues Cys14 and Cys18. A G-alpha domain is found at 47–377; sequence RLVKILLLGA…HDNLKQLMLQ (331 aa). Positions 50-63 are G1 motif; it reads KILLLGAGESGKST. GTP-binding positions include 58–63, Ser173, and 197–200; these read ESGKST and LLAR. Ser62 lines the Mg(2+) pocket. Positions 195-203 are G2 motif; the sequence is DILLARRPT. A Mg(2+)-binding site is contributed by Thr203. Phosphothreonine; by PKA is present on Thr203. Residues 218-227 form a G3 motif region; that stretch reads FKMVDVGGQR. The segment at 287-294 is G4 motif; that stretch reads ILFLNKTD. GTP contacts are provided by residues 291 to 294 and Ala349; that span reads NKTD. A G5 motif region spans residues 347–352; sequence TTAINT.

The protein belongs to the G-alpha family. G(12) subfamily. As to quaternary structure, g proteins are composed of 3 units; alpha, beta and gamma. The alpha chain contains the guanine nucleotide binding site. Interacts with UBXD5. Interacts with HAX1. Interacts (in GTP-bound form) with PPP5C (via TPR repeats); activates PPP5C phosphatase activity and translocates PPP5C to the cell membrane. Interacts with RGS22. Interacts (in GTP-bound form) with ARHGEF1. Interacts (in GTP-bound form) with ARHGEF11 (via RGS domain). Interacts (in GTP-bound form) with ARHGEF12 (via RGS domain). Interacts with CTNND1. Interacts with GASL2L2. Interacts with GPR35. Interacts with GPR174. In terms of processing, palmitoylation is critical for proper membrane localization and signaling. Phosphorylation on Thr-203 by PKA destabilizes the heterotrimer of alpha, beta and gamma, and inhibits Rho activation. Expressed in testis, including in Leydig cells and in the seminiferous epithelium, in differentiating cells from the spermatogonia to mature spermatozoa stages and round spermatids (at protein level). Expressed in 99.2% of spermatozoa from healthy individuals, but only in 28.6% of macrocephalic spermatozoa from infertile patients (at protein level).

The protein localises to the cell membrane. The protein resides in the melanosome. It is found in the cytoplasm. It localises to the nucleus. Guanine nucleotide-binding proteins (G proteins) are involved as modulators or transducers in various transmembrane signaling systems. Activates effector molecule RhoA by binding and activating RhoGEFs (ARHGEF1/p115RhoGEF, ARHGEF11/PDZ-RhoGEF and ARHGEF12/LARG). GNA13-dependent Rho signaling subsequently regulates transcription factor AP-1 (activating protein-1). Promotes tumor cell invasion and metastasis by activating RhoA/ROCK signaling pathway. Inhibits CDH1-mediated cell adhesion in a process independent from Rho activation. In lymphoid follicles, transmits P2RY8- and S1PR2-dependent signals that lead to inhibition of germinal center (GC) B cell growth and migration outside the GC niche. In Homo sapiens (Human), this protein is Guanine nucleotide-binding protein subunit alpha-13 (GNA13).